Consider the following 652-residue polypeptide: DNA ligase (652 aa).

NAD(+)-binding positions include 29–33, 78–79, and Glu-107; these read DSEYD and SL. The N6-AMP-lysine intermediate role is filled by Lys-109. Residues Arg-130, Glu-164, Lys-278, and Lys-302 each coordinate NAD(+). Residues Cys-395, Cys-398, Cys-413, and Cys-418 each contribute to the Zn(2+) site. The BRCT domain maps to 577–652; sequence DQQAALFGLT…IEDEDWLLNL (76 aa).

It belongs to the NAD-dependent DNA ligase family. LigA subfamily. Mg(2+) is required as a cofactor. Requires Mn(2+) as cofactor.

It carries out the reaction NAD(+) + (deoxyribonucleotide)n-3'-hydroxyl + 5'-phospho-(deoxyribonucleotide)m = (deoxyribonucleotide)n+m + AMP + beta-nicotinamide D-nucleotide.. DNA ligase that catalyzes the formation of phosphodiester linkages between 5'-phosphoryl and 3'-hydroxyl groups in double-stranded DNA using NAD as a coenzyme and as the energy source for the reaction. It is essential for DNA replication and repair of damaged DNA. This is DNA ligase from Streptococcus equi subsp. equi (strain 4047).